The following is a 443-amino-acid chain: 23S rRNA (uracil(1939)-C(5))-methyltransferase RlmD (443 aa).

The TRAM domain occupies 4 to 66; that stretch reads QNRFDRTSFQ…RHFDEARVVE (63 aa). 4 residues coordinate [4Fe-4S] cluster: C79, C85, C88, and C167. S-adenosyl-L-methionine is bound by residues Q275, F304, N309, E325, D352, and D373. Catalysis depends on C399, which acts as the Nucleophile.

Belongs to the class I-like SAM-binding methyltransferase superfamily. RNA M5U methyltransferase family. RlmD subfamily.

The catalysed reaction is uridine(1939) in 23S rRNA + S-adenosyl-L-methionine = 5-methyluridine(1939) in 23S rRNA + S-adenosyl-L-homocysteine + H(+). Catalyzes the formation of 5-methyl-uridine at position 1939 (m5U1939) in 23S rRNA. In Xylella fastidiosa (strain 9a5c), this protein is 23S rRNA (uracil(1939)-C(5))-methyltransferase RlmD.